Reading from the N-terminus, the 336-residue chain is Dihydroorotate dehydrogenase (quinone) (336 aa).

FMN-binding positions include 62–66 and Thr86; that span reads AGLDK. Lys66 contacts substrate. Substrate is bound at residue 111–115; the sequence is NRMGF. FMN-binding residues include Asn139 and Asn172. Substrate is bound at residue Asn172. The active-site Nucleophile is the Ser175. Asn177 is a binding site for substrate. FMN-binding residues include Lys217 and Thr245. Residue 246 to 247 participates in substrate binding; it reads NT. FMN contacts are provided by residues Gly268, Gly297, and 318-319; that span reads YS.

The protein belongs to the dihydroorotate dehydrogenase family. Type 2 subfamily. As to quaternary structure, monomer. It depends on FMN as a cofactor.

Its subcellular location is the cell membrane. It carries out the reaction (S)-dihydroorotate + a quinone = orotate + a quinol. It functions in the pathway pyrimidine metabolism; UMP biosynthesis via de novo pathway; orotate from (S)-dihydroorotate (quinone route): step 1/1. Catalyzes the conversion of dihydroorotate to orotate with quinone as electron acceptor. The sequence is that of Dihydroorotate dehydrogenase (quinone) from Escherichia coli O17:K52:H18 (strain UMN026 / ExPEC).